We begin with the raw amino-acid sequence, 316 residues long: Porphobilinogen deaminase (316 aa).

Position 249 is an S-(dipyrrolylmethanemethyl)cysteine (Cys-249).

Belongs to the HMBS family. As to quaternary structure, monomer. Dipyrromethane is required as a cofactor.

The catalysed reaction is 4 porphobilinogen + H2O = hydroxymethylbilane + 4 NH4(+). Its pathway is porphyrin-containing compound metabolism; protoporphyrin-IX biosynthesis; coproporphyrinogen-III from 5-aminolevulinate: step 2/4. Functionally, tetrapolymerization of the monopyrrole PBG into the hydroxymethylbilane pre-uroporphyrinogen in several discrete steps. The protein is Porphobilinogen deaminase of Nitrobacter winogradskyi (strain ATCC 25391 / DSM 10237 / CIP 104748 / NCIMB 11846 / Nb-255).